Here is a 460-residue protein sequence, read N- to C-terminus: 3-isopropylmalate dehydratase large subunit (460 aa).

Residues Cys-338, Cys-398, and Cys-401 each contribute to the [4Fe-4S] cluster site.

Belongs to the aconitase/IPM isomerase family. LeuC type 1 subfamily. Heterodimer of LeuC and LeuD. [4Fe-4S] cluster is required as a cofactor.

The enzyme catalyses (2R,3S)-3-isopropylmalate = (2S)-2-isopropylmalate. The protein operates within amino-acid biosynthesis; L-leucine biosynthesis; L-leucine from 3-methyl-2-oxobutanoate: step 2/4. Its function is as follows. Catalyzes the isomerization between 2-isopropylmalate and 3-isopropylmalate, via the formation of 2-isopropylmaleate. The sequence is that of 3-isopropylmalate dehydratase large subunit from Streptococcus thermophilus (strain ATCC BAA-491 / LMD-9).